Consider the following 628-residue polypeptide: Alpha-L-arabinofuranosidase A (628 aa).

The first 25 residues, 1 to 25, serve as a signal peptide directing secretion; the sequence is MVAFSALSGVSALSLLLCLVQHAHG. 8 N-linked (GlcNAc...) asparagine glycosylation sites follow: Asn-36, Asn-51, Asn-74, Asn-152, Asn-171, Asn-260, Asn-359, and Asn-493.

This sequence belongs to the glycosyl hydrolase 51 family.

Its subcellular location is the secreted. It catalyses the reaction Hydrolysis of terminal non-reducing alpha-L-arabinofuranoside residues in alpha-L-arabinosides.. It participates in glycan metabolism; L-arabinan degradation. In terms of biological role, alpha-L-arabinofuranosidase involved in the degradation of arabinoxylan, a major component of plant hemicellulose. Acts only on small linear 1,5-alpha-linked L-arabinofuranosyl oligosaccharides. This is Alpha-L-arabinofuranosidase A (abfA) from Aspergillus kawachii (strain NBRC 4308) (White koji mold).